We begin with the raw amino-acid sequence, 263 residues long: Probable ABC transporter permease protein slr1045 (263 aa).

The next 7 helical transmembrane spans lie at 12 to 32 (LWFQ…LHIL), 52 to 72 (SMAI…IQVA), 97 to 117 (APVL…AAEI), 140 to 162 (LVVP…SLFV), 167 to 186 (GLVI…LNSV), 192 to 212 (LWDV…IAII), and 234 to 254 (AVVT…WLMF).

This sequence belongs to the MlaE permease family.

It localises to the cell membrane. Its function is as follows. Could be part of an ABC transporter complex. This chain is Probable ABC transporter permease protein slr1045, found in Synechocystis sp. (strain ATCC 27184 / PCC 6803 / Kazusa).